Reading from the N-terminus, the 358-residue chain is Protein Wnt-8b (358 aa).

The signal sequence occupies residues Met1–Gly23. Cys55 and Cys66 form a disulfide bridge. N-linked (GlcNAc...) asparagine glycosylation is present at Asn104. 10 disulfides stabilise this stretch: Cys105–Cys113, Cys115–Cys133, Cys181–Cys195, Cys183–Cys190, Cys257–Cys295, Cys273–Cys288, Cys292–Cys334, Cys310–Cys325, Cys312–Cys322, and Cys317–Cys318. The O-palmitoleoyl serine moiety is linked to residue Ser187. Residues Asn260 and Asn279 are each glycosylated (N-linked (GlcNAc...) asparagine). An N-linked (GlcNAc...) asparagine glycan is attached at Asn345.

It belongs to the Wnt family. Post-translationally, palmitoleoylation is required for efficient binding to frizzled receptors. Depalmitoleoylation leads to Wnt signaling pathway inhibition. In terms of processing, proteolytic processing by tiki1 and tiki2 promotes oxidation and formation of large disulfide-bond oligomers, leading to inactivation of wnt8b. Hindbrain r1, 2 and 5.

It is found in the secreted. It localises to the extracellular space. The protein localises to the extracellular matrix. Its function is as follows. Ligand for fzd8a, a member of the G-protein coupled frizzled receptor family. May play a role in the establishment of polarity in the nervous system. Involved in canonical Wnt signaling pathway. During embryonic development, required for the acquisition of caudal diencephalic fate. Antagonizes eye specification. The chain is Protein Wnt-8b (wnt8b) from Danio rerio (Zebrafish).